Reading from the N-terminus, the 110-residue chain is UPF0060 membrane protein Mmwyl1_1139 (110 aa).

Transmembrane regions (helical) follow at residues 7-27, 33-53, 63-83, and 87-107; these read ISLF…PYLW, TIWL…LLTL, AAYG…VDGI, and TWDM…MFAP.

This sequence belongs to the UPF0060 family.

The protein resides in the cell inner membrane. The chain is UPF0060 membrane protein Mmwyl1_1139 from Marinomonas sp. (strain MWYL1).